Reading from the N-terminus, the 305-residue chain is 4-diphosphocytidyl-2-C-methyl-D-erythritol kinase (305 aa).

Residue Lys10 is part of the active site. 95–105 lines the ATP pocket; that stretch reads PVTAGLGGGSS. The active site involves Asp136. A disordered region spans residues 286–305; the sequence is PGVTPWRSPRSASSPSTKRS. Residues 290-305 are compositionally biased toward low complexity; it reads PWRSPRSASSPSTKRS.

Belongs to the GHMP kinase family. IspE subfamily.

The enzyme catalyses 4-CDP-2-C-methyl-D-erythritol + ATP = 4-CDP-2-C-methyl-D-erythritol 2-phosphate + ADP + H(+). Its pathway is isoprenoid biosynthesis; isopentenyl diphosphate biosynthesis via DXP pathway; isopentenyl diphosphate from 1-deoxy-D-xylulose 5-phosphate: step 3/6. In terms of biological role, catalyzes the phosphorylation of the position 2 hydroxy group of 4-diphosphocytidyl-2C-methyl-D-erythritol. This Anaeromyxobacter sp. (strain Fw109-5) protein is 4-diphosphocytidyl-2-C-methyl-D-erythritol kinase.